The chain runs to 447 residues: NADH peroxidase (447 aa).

Residues 7 to 11 (GSSHG), glutamate 32, cysteine 42, 110 to 113 (SPGA), and arginine 132 each bind FAD. Catalysis depends on histidine 10, which acts as the Proton acceptor. The active-site Redox-active is the cysteine 42. Cysteine 42 carries the cysteine sulfenic acid (-SOH) modification. Residues isoleucine 160, aspartate 179, tyrosine 188, and glycine 243 each contribute to the NAD(+) site. FAD is bound at residue aspartate 281. Alanine 297 lines the NAD(+) pocket. Alanine 299 contributes to the FAD binding site. Glycine 328 contacts NAD(+).

It belongs to the class-III pyridine nucleotide-disulfide oxidoreductase family. Homotetramer. Requires FAD as cofactor.

It carries out the reaction H2O2 + NADH + H(+) = NAD(+) + 2 H2O. Peroxidase whose active site is a redox-active cysteine-sulfenic acid. This chain is NADH peroxidase (npr), found in Enterococcus faecalis (strain ATCC 700802 / V583).